Here is a 468-residue protein sequence, read N- to C-terminus: Beta-monoglucosyldiacylglycerol synthase (468 aa).

A run of 4 helical transmembrane segments spans residues 51 to 71 (AALVLTIVWSGTIALHLVSWG), 72 to 92 (SIFILGLTTVLGIHALGVVFA), 361 to 381 (FMLTMYILPTAAIPDLLMAVV), and 387 to 407 (MLGPVTGLSVTMSVVGMFAGL).

Belongs to the glycosyltransferase 2 family. Requires Mg(2+) as cofactor.

It localises to the membrane. It carries out the reaction a 1,2-diacyl-sn-glycerol + UDP-alpha-D-glucose = a 1,2-diacyl-3-O-(beta-D-glucopyranosyl)-sn-glycerol + UDP + H(+). Glucosyltransferase involved in the biosynthesis of the non-bilayer-forming membrane lipid beta-monoglucosyldiacylglycerol which contributes to regulate the properties and stability of the membrane. Catalyzes the transfer of a glucosyl residue from UDP-Glc to diacylglycerol (DAG) acceptor to form the corresponding beta-glucosyl-DAG (1,2-diacyl-3-O-(beta-D-glucopyranosyl)-sn-glycerol). It can only use UDP-Glc as sugar donor. The sequence is that of Beta-monoglucosyldiacylglycerol synthase from Trichormus variabilis (strain ATCC 29413 / PCC 7937) (Anabaena variabilis).